We begin with the raw amino-acid sequence, 149 residues long: CyanoQ (149 aa).

An N-terminal signal peptide occupies residues 1–21 (MSRLRSLLSLILVLVTTVLVS). Cys22 carries the N-palmitoyl cysteine lipid modification. Cys22 carries the S-diacylglycerol cysteine lipid modification.

Belongs to the PsbQ family. CyanoQ subfamily. In terms of assembly, PSII is composed of 1 copy each of membrane proteins PsbA, PsbB, PsbC, PsbD, PsbE, PsbF, PsbH, PsbI, PsbJ, PsbK, PsbL, PsbM, PsbT, PsbX, PsbY, PsbZ, Psb30/Ycf12, peripheral proteins PsbO, CyanoQ (PsbQ), PsbU, PsbV and a large number of cofactors. It forms dimeric complexes. Pull-down experiments with His-tagged PsbQ pull down dimeric, but not monomeric, PSII. The N-terminus is blocked. Upon expression in E.coli the N-terminus is modified with a diacylglycerol and an acyl group bound to two palmitates and one palmitoleate.

It is found in the cellular thylakoid membrane. One of the extrinsic, lumenal subunits of photosystem II (PSII), which stabilize and protect the oxygen-evolving complex. PSII is a light-driven water plastoquinone oxidoreductase, using light energy to abstract electrons from H(2)O, generating a proton gradient subsequently used for ATP formation. Plays a role in the stability of the oxygen-evolving center on the luminal side of PSII. Required for optimal photoautotrophic growth in the absence of Ca(2+) or Cl(-), functions in optimizing PSII water oxidation/O(2) evolving activity. Requires PsbO to bind to PSII. The protein is CyanoQ of Synechocystis sp. (strain ATCC 27184 / PCC 6803 / Kazusa).